The following is a 357-amino-acid chain: Putative lipopolysaccharide heptosyltransferase 4 (357 aa).

It catalyses the reaction alpha-D-Glc-(1-&gt;2)-alpha-D-Glc-(1-&gt;3)-[alpha-D-Gal-(1-&gt;6)]-alpha-D-Glc-(1-&gt;3)-[L-alpha-D-Hep-(1-&gt;7)]-4-O-PO3(2-)-L-alpha-D-Hep-(1-&gt;3)-4-O-PO3(2-)-L-alpha-D-Hep-(1-&gt;5)-[alpha-Kdo-(2-&gt;4)]-alpha-Kdo-(2-&gt;6)-lipid A + ADP-L-glycero-beta-D-manno-heptose = lipid A-core + ADP + H(+). The protein operates within bacterial outer membrane biogenesis; LPS core biosynthesis. Functionally, transferase involved in the biosynthesis of the core oligosaccharide region of lipopolysaccharide (LPS). May catalyze the addition of the terminal heptose (heptose IV) to the outer-core glucose III, the last step of the lipid A-core oligosaccharide biosynthesis. The sequence is that of Putative lipopolysaccharide heptosyltransferase 4 from Escherichia coli (strain K12).